Here is a 103-residue protein sequence, read N- to C-terminus: Enhancer of rudimentary homolog (103 aa).

It belongs to the E(R) family. As to quaternary structure, homodimer.

Functionally, may have a role in the cell cycle. This is Enhancer of rudimentary homolog from Caenorhabditis elegans.